An 87-amino-acid chain; its full sequence is Toxin ICK-42 (87 aa).

Positions 1-19 are cleaved as a signal peptide; that stretch reads MKPIVYMLLFCAFTVVILG. Intrachain disulfides connect cysteine 40/cysteine 54, cysteine 40/cysteine 77, cysteine 53/cysteine 66, and cysteine 80/cysteine 87.

This sequence belongs to the neurotoxin 27 (Jztx-72) family. ICK-41 subfamily. Expressed by the venom gland.

Its subcellular location is the secreted. Probable neurotoxin with ion channel impairing activity. This chain is Toxin ICK-42, found in Trittame loki (Brush-footed trapdoor spider).